The primary structure comprises 159 residues: Probable acetolactate synthase small subunit (159 aa).

An ACT domain is found at 4–78 (TIAVLVENKP…ETIKVSEITE (75 aa)).

It belongs to the acetolactate synthase small subunit family. Dimer of large and small chains.

The enzyme catalyses 2 pyruvate + H(+) = (2S)-2-acetolactate + CO2. It participates in amino-acid biosynthesis; L-isoleucine biosynthesis; L-isoleucine from 2-oxobutanoate: step 1/4. Its pathway is amino-acid biosynthesis; L-valine biosynthesis; L-valine from pyruvate: step 1/4. This chain is Probable acetolactate synthase small subunit (ilvH), found in Archaeoglobus fulgidus (strain ATCC 49558 / DSM 4304 / JCM 9628 / NBRC 100126 / VC-16).